Reading from the N-terminus, the 240-residue chain is Probable septum site-determining protein MinC (240 aa).

Belongs to the MinC family. Interacts with MinD and FtsZ.

Its function is as follows. Cell division inhibitor that blocks the formation of polar Z ring septums. Rapidly oscillates between the poles of the cell to destabilize FtsZ filaments that have formed before they mature into polar Z rings. Prevents FtsZ polymerization. In Acinetobacter baumannii (strain ATCC 17978 / DSM 105126 / CIP 53.77 / LMG 1025 / NCDC KC755 / 5377), this protein is Probable septum site-determining protein MinC.